The sequence spans 423 residues: Acetylornithine aminotransferase, mitochondrial (423 aa).

The transit peptide at 1–13 (MFKRYLSSTSSRR) directs the protein to the mitochondrion. Lys276 bears the N6-(pyridoxal phosphate)lysine mark.

Belongs to the class-III pyridoxal-phosphate-dependent aminotransferase family. Requires pyridoxal 5'-phosphate as cofactor.

It is found in the mitochondrion matrix. It catalyses the reaction N(2)-acetyl-L-ornithine + 2-oxoglutarate = N-acetyl-L-glutamate 5-semialdehyde + L-glutamate. The protein operates within amino-acid biosynthesis; L-arginine biosynthesis; N(2)-acetyl-L-ornithine from L-glutamate: step 4/4. Functionally, catalyzes the conversion of N-acetylglutamate-gamma-semialdehyde (NAGSA) to N-acetylornithine in arginine biosynthesis. This Saccharomyces cerevisiae (strain ATCC 204508 / S288c) (Baker's yeast) protein is Acetylornithine aminotransferase, mitochondrial (ARG8).